Here is a 378-residue protein sequence, read N- to C-terminus: O-methyltransferase gsfD (378 aa).

Residues 219 to 220, Asp-244, 266 to 267, and Arg-282 each bind S-adenosyl-L-methionine; these read GG and DM. The active-site Proton acceptor is the His-286.

This sequence belongs to the class I-like SAM-binding methyltransferase superfamily. Cation-independent O-methyltransferase family.

The catalysed reaction is desmethyl-dehydrogriseofulvin + S-adenosyl-L-methionine = dehydrogriseofulvin + S-adenosyl-L-homocysteine + H(+). It functions in the pathway secondary metabolite biosynthesis; terpenoid biosynthesis. Functionally, O-methyltransferase; part of the gene cluster that mediates the biosynthesis of griseofulvin, an important antifungal drug that has been in use for a long time for treating dermatophyte infections. The first step of the pathway is the formation of the heptaketide backbone by gsfA which is initiated by priming with acetyl-CoA, followed by sequential condensations of 6 malonyl-CoA units. The resulting benzophenone can undergo a spontaneous dehydration to form norlichexanthone. However, the true precursor for the griseofulvin biosynthesis is not norlichexanthone, but the heptaketide benzophenone that is O-methylated at 3-OH by gsfB to produce griseophenone D which is further methylated at 9-OH by gsfC to yield griseophenone C. Griseophenone C is then substrate of halogenase gsfI which is responsible for the regio-specific chlorination at the C13 position to form griseophenone B. The cytochrome P450 gsfF catalyzes the coupling of orcinol and phloroglucinol rings in griseophenone B to form desmethyl-dehydrogriseofulvin A which is further methylated at 5-OH by gsfD to yield dehydrogriseofulvin. Finally, gsfE performs stereospecific reduction of enone 18 of dehydrogriseofulvin to afford the final product griseofulvin. This chain is O-methyltransferase gsfD, found in Penicillium aethiopicum.